A 633-amino-acid chain; its full sequence is ATP-dependent zinc metalloprotease FtsH (633 aa).

Topologically, residues 1–19 (MTPSNEPGKQDQIPQPGPT) are cytoplasmic. The chain crosses the membrane as a helical span at residues 20-40 (IPNQYSFLWLSAAIFLMFLWL). Over 41 to 133 (QGNNQQQQQE…SRSGRPWWQE (93 aa)) the chain is Periplasmic. A helical transmembrane segment spans residues 134 to 154 (LILGFLPWILLLALMFWFWGA). Over 155–633 (AQKRMTQGGG…LEEARSRETA (479 aa)) the chain is Cytoplasmic. An ATP-binding site is contributed by 226-233 (GPPGTGKT). Zn(2+) is bound at residue His-447. The active site involves Glu-448. The Zn(2+) site is built by His-451 and Asp-523.

It in the central section; belongs to the AAA ATPase family. The protein in the C-terminal section; belongs to the peptidase M41 family. As to quaternary structure, homohexamer. Requires Zn(2+) as cofactor.

The protein localises to the cell inner membrane. Its function is as follows. Acts as a processive, ATP-dependent zinc metallopeptidase for both cytoplasmic and membrane proteins. Plays a role in the quality control of integral membrane proteins. The polypeptide is ATP-dependent zinc metalloprotease FtsH (Marinobacter nauticus (strain ATCC 700491 / DSM 11845 / VT8) (Marinobacter aquaeolei)).